The sequence spans 343 residues: Dihydroorotate dehydrogenase (quinone) (343 aa).

FMN-binding positions include 65-69 (AGFDK) and threonine 89. Lysine 69 is a binding site for substrate. 114–118 (NRMGF) serves as a coordination point for substrate. Residues asparagine 145 and asparagine 178 each coordinate FMN. Residue asparagine 178 coordinates substrate. The active-site Nucleophile is serine 181. Asparagine 183 is a substrate binding site. Lysine 215 and threonine 243 together coordinate FMN. 244-245 (NT) lines the substrate pocket. FMN contacts are provided by residues glycine 269, glycine 298, and 319–320 (YT).

Belongs to the dihydroorotate dehydrogenase family. Type 2 subfamily. As to quaternary structure, monomer. FMN serves as cofactor.

The protein localises to the cell membrane. It catalyses the reaction (S)-dihydroorotate + a quinone = orotate + a quinol. The protein operates within pyrimidine metabolism; UMP biosynthesis via de novo pathway; orotate from (S)-dihydroorotate (quinone route): step 1/1. Its function is as follows. Catalyzes the conversion of dihydroorotate to orotate with quinone as electron acceptor. This is Dihydroorotate dehydrogenase (quinone) from Leifsonia xyli subsp. xyli (strain CTCB07).